A 262-amino-acid chain; its full sequence is Mitochondrial calcium uniporter regulator 1 (262 aa).

The stretch at 138-175 (EKSEFSALRTQNEKVKIELQQLKKQLNDSIVKVRASNK) forms a coiled coil. Residues 239 to 261 (TIKYLAGSVFTCLTIALGFYRLW) traverse the membrane as a helical segment.

It belongs to the CCDC90 family.

Its subcellular location is the mitochondrion inner membrane. Its function is as follows. Key regulator of mitochondrial calcium uniporter (mcu) required for calcium entry into mitochondrion. In Xenopus tropicalis (Western clawed frog), this protein is Mitochondrial calcium uniporter regulator 1.